The chain runs to 338 residues: Legumin B (338 aa).

The interval S16–G162 is disordered. Basic and acidic residues predominate over residues N18–L44. Composition is skewed to acidic residues over residues D82–E92 and E136–E150. The region spanning E174–A321 is the Cupin type-1 domain.

The protein belongs to the 11S seed storage protein (globulins) family. As to quaternary structure, hexamer; each subunit is composed of an acidic and a basic chain derived from a single precursor and linked by a disulfide bond.

In terms of biological role, this protein found in the seeds of many leguminous and non-leguminous plants is the source of sulfur-containing amino acids in seed meals. This Pisum sativum (Garden pea) protein is Legumin B (LEGB).